The primary structure comprises 292 residues: Bifunctional protein FolD (292 aa).

NADP(+) is bound by residues 171–173 (GAS), Ile-196, and Ile-237.

It belongs to the tetrahydrofolate dehydrogenase/cyclohydrolase family. Homodimer.

It catalyses the reaction (6R)-5,10-methylene-5,6,7,8-tetrahydrofolate + NADP(+) = (6R)-5,10-methenyltetrahydrofolate + NADPH. The catalysed reaction is (6R)-5,10-methenyltetrahydrofolate + H2O = (6R)-10-formyltetrahydrofolate + H(+). The protein operates within one-carbon metabolism; tetrahydrofolate interconversion. In terms of biological role, catalyzes the oxidation of 5,10-methylenetetrahydrofolate to 5,10-methenyltetrahydrofolate and then the hydrolysis of 5,10-methenyltetrahydrofolate to 10-formyltetrahydrofolate. The polypeptide is Bifunctional protein FolD (Helicobacter acinonychis (strain Sheeba)).